A 450-amino-acid polypeptide reads, in one-letter code: MREVISIHIGQAGVQIGNACWELYCLEHGIQPDGQMPSDKSLGGCDDSFSTFFSETGSGRHVPRAVMIDLEPTVIDEIRTGTYRSLFHPEQLITGKEDAANNYARGHYTIGKEIIDLTLDRIRRLADNCTGLQGFLVFHSFGGGTGSGFTSLLMERLSVDYGKKAKLEFSVYPAPQVSTAVVEPYNSILTTHTTLEHSDCSFMVDNEAIYDICRRNLDIERPSYTNLNRLIGQIVSSITASLRFDGALNVDLTEFQTNLVPYPRIHFPLATFSPVISAEKAYHEQLSVAEITNMCFEPHNQMVKCDPRHGKYMAVCLLFRGDVVPKDVNAAIATIKTKRSIQFVDWCPTGFKVGINYQPPTVVPGGDLAKVPRAVCMLSNTTAIAEAWARLDHKFDLMYAKRAFVHWYVGEGMEEGEFSEAREDLAALEKDYEEVGVDSLEDNGEEGDEY.

Q11 lines the GTP pocket. N6-acetyllysine is present on K40. Residues E71, S140, G144, T145, T179, N206, and N228 each coordinate GTP. E71 is a Mg(2+) binding site. E254 is an active-site residue.

Belongs to the tubulin family. As to quaternary structure, dimer of alpha and beta chains. A typical microtubule is a hollow water-filled tube with an outer diameter of 25 nm and an inner diameter of 15 nM. Alpha-beta heterodimers associate head-to-tail to form protofilaments running lengthwise along the microtubule wall with the beta-tubulin subunit facing the microtubule plus end conferring a structural polarity. Microtubules usually have 13 protofilaments but different protofilament numbers can be found in some organisms and specialized cells. Mg(2+) serves as cofactor. In terms of processing, undergoes a tyrosination/detyrosination cycle, the cyclic removal and re-addition of a C-terminal tyrosine residue by the enzymes tubulin tyrosine carboxypeptidase (TTCP) and tubulin tyrosine ligase (TTL), respectively. Post-translationally, acetylation of alpha chains at Lys-40 stabilizes microtubules and affects affinity and processivity of microtubule motors. This modification has a role in multiple cellular functions, ranging from cell motility, cell cycle progression or cell differentiation to intracellular trafficking and signaling.

The protein localises to the cytoplasm. It is found in the cytoskeleton. The catalysed reaction is GTP + H2O = GDP + phosphate + H(+). In terms of biological role, tubulin is the major constituent of microtubules, a cylinder consisting of laterally associated linear protofilaments composed of alpha- and beta-tubulin heterodimers. Microtubules grow by the addition of GTP-tubulin dimers to the microtubule end, where a stabilizing cap forms. Below the cap, tubulin dimers are in GDP-bound state, owing to GTPase activity of alpha-tubulin. The protein is Tubulin alpha chain of Haemonchus contortus (Barber pole worm).